Here is a 130-residue protein sequence, read N- to C-terminus: uncharacterized protein (130 aa).

2 helical membrane passes run 35–57 (FLIT…FISL) and 72–91 (IVFF…LLLL).

It is found in the cell membrane. This is an uncharacterized protein from Pasteurella multocida (strain Pm70).